Consider the following 129-residue polypeptide: Modulator protein MzrA (129 aa).

Over 1 to 14 (MINFRGRFGRPLWH) the chain is Cytoplasmic. A helical membrane pass occupies residues 15–35 (YLVLPVVLLLLAVILLTPMIV). The Periplasmic portion of the chain corresponds to 36-129 (QTESTLKIRP…VFRSNQQNLG (94 aa)).

The protein belongs to the MzrA family. In terms of assembly, interacts with EnvZ.

It localises to the cell inner membrane. Functionally, modulates the activity of the EnvZ/OmpR two-component regulatory system, probably by directly modulating EnvZ enzymatic activity and increasing stability of phosphorylated OmpR. In Yersinia pestis (strain Pestoides F), this protein is Modulator protein MzrA.